The following is a 302-amino-acid chain: Sulfate adenylyltransferase subunit 2 (302 aa).

Residues E279–F302 are disordered. The segment covering R280–F302 has biased composition (basic and acidic residues).

The protein belongs to the PAPS reductase family. CysD subfamily. Heterodimer composed of CysD, the smaller subunit, and CysN.

It catalyses the reaction sulfate + ATP + H(+) = adenosine 5'-phosphosulfate + diphosphate. It participates in sulfur metabolism; hydrogen sulfide biosynthesis; sulfite from sulfate: step 1/3. In terms of biological role, with CysN forms the ATP sulfurylase (ATPS) that catalyzes the adenylation of sulfate producing adenosine 5'-phosphosulfate (APS) and diphosphate, the first enzymatic step in sulfur assimilation pathway. APS synthesis involves the formation of a high-energy phosphoric-sulfuric acid anhydride bond driven by GTP hydrolysis by CysN coupled to ATP hydrolysis by CysD. The polypeptide is Sulfate adenylyltransferase subunit 2 (Photobacterium profundum (strain SS9)).